The sequence spans 101 residues: Small ribosomal subunit protein bS16 (101 aa).

The protein belongs to the bacterial ribosomal protein bS16 family.

The chain is Small ribosomal subunit protein bS16 from Ureaplasma parvum serovar 3 (strain ATCC 700970).